The primary structure comprises 149 residues: Putative pre-16S rRNA nuclease (149 aa).

It belongs to the YqgF nuclease family.

Its subcellular location is the cytoplasm. Could be a nuclease involved in processing of the 5'-end of pre-16S rRNA. This is Putative pre-16S rRNA nuclease from Synechococcus elongatus (strain ATCC 33912 / PCC 7942 / FACHB-805) (Anacystis nidulans R2).